The sequence spans 418 residues: Tyrosine--tRNA ligase (418 aa).

Tyr34 is an L-tyrosine binding site. Positions 39-48 (PTADSLHLGH) match the 'HIGH' region motif. The L-tyrosine site is built by Tyr169 and Gln173. The 'KMSKS' region motif lies at 229-233 (KFGKS). Lys232 is a binding site for ATP. In terms of domain architecture, S4 RNA-binding spans 352-418 (LNLVDMLVTA…GKKKYAVLTY (67 aa)).

It belongs to the class-I aminoacyl-tRNA synthetase family. TyrS type 1 subfamily. As to quaternary structure, homodimer.

The protein resides in the cytoplasm. It carries out the reaction tRNA(Tyr) + L-tyrosine + ATP = L-tyrosyl-tRNA(Tyr) + AMP + diphosphate + H(+). Catalyzes the attachment of tyrosine to tRNA(Tyr) in a two-step reaction: tyrosine is first activated by ATP to form Tyr-AMP and then transferred to the acceptor end of tRNA(Tyr). This Streptococcus pyogenes serotype M5 (strain Manfredo) protein is Tyrosine--tRNA ligase.